Here is a 179-residue protein sequence, read N- to C-terminus: Large ribosomal subunit protein uL5 (179 aa).

It belongs to the universal ribosomal protein uL5 family. As to quaternary structure, part of the 50S ribosomal subunit; part of the 5S rRNA/L5/L18/L25 subcomplex. Contacts the 5S rRNA and the P site tRNA. Forms a bridge to the 30S subunit in the 70S ribosome.

This is one of the proteins that bind and probably mediate the attachment of the 5S RNA into the large ribosomal subunit, where it forms part of the central protuberance. In the 70S ribosome it contacts protein S13 of the 30S subunit (bridge B1b), connecting the 2 subunits; this bridge is implicated in subunit movement. Contacts the P site tRNA; the 5S rRNA and some of its associated proteins might help stabilize positioning of ribosome-bound tRNAs. This Cellvibrio japonicus (strain Ueda107) (Pseudomonas fluorescens subsp. cellulosa) protein is Large ribosomal subunit protein uL5.